The following is a 930-amino-acid chain: Polypeptide N-acetylgalactosaminyltransferase 5 (930 aa).

Topologically, residues 1 to 12 (MNKIRKFFRGSG) are cytoplasmic. Residues 13-35 (RVLAFIFVASVIWLLFDMAALRL) form a helical; Signal-anchor for type II membrane protein membrane-spanning segment. The Lumenal segment spans residues 36–930 (SFSEINTGIL…KWKFEKYYDV (895 aa)). The disordered stretch occupies residues 163–210 (GSEKDSFTVSRGVPLNKTAEHTETLDKKQEAPENYNLSSDTSKQASQR). N-linked (GlcNAc...) asparagine glycosylation is present at asparagine 178. Positions 180-193 (TAEHTETLDKKQEA) are enriched in basic and acidic residues. The span at 197 to 210 (YNLSSDTSKQASQR) shows a compositional bias: polar residues. N-linked (GlcNAc...) asparagine glycosylation is found at asparagine 198 and asparagine 213. Residue serine 285 is modified to Phosphoserine. Asparagine 287 and asparagine 309 each carry an N-linked (GlcNAc...) asparagine glycan. Residues 344–377 (LGESQGKHIPRSQSQTLSSPLAPKRAVSQSKPTL) are disordered. Residues asparagine 387 and asparagine 403 are each glycosylated (N-linked (GlcNAc...) asparagine). Disulfide bonds link cysteine 476-cysteine 708, cysteine 699-cysteine 779, and cysteine 812-cysteine 825. Residues 485–594 (LPTTSIIMCF…VGWLEPLLER (110 aa)) are catalytic subdomain A. The substrate site is built by aspartate 526 and arginine 555. Residue asparagine 568 is glycosylated (N-linked (GlcNAc...) asparagine). Aspartate 578 provides a ligand contact to Mn(2+). Serine 579 contacts substrate. Residue histidine 580 participates in Mn(2+) binding. Residues 654 to 716 (IIRCPVMAGG…PCSRVGHIFR (63 aa)) form a catalytic subdomain B region. Tryptophan 685 is a binding site for substrate. Residue histidine 713 participates in Mn(2+) binding. Residues arginine 716 and tyrosine 721 each coordinate substrate. N-linked (GlcNAc...) asparagine glycans are attached at residues asparagine 766, asparagine 817, and asparagine 835. A Ricin B-type lectin domain is found at 794–925 (KAPVVRASGV…TEPQQKWKFE (132 aa)). 2 disulfides stabilise this stretch: cysteine 848–cysteine 863 and cysteine 898–cysteine 913. N-linked (GlcNAc...) asparagine glycosylation occurs at asparagine 902.

Belongs to the glycosyltransferase 2 family. GalNAc-T subfamily. In terms of assembly, interacts with EXT2. Does not interact with EXT1, EXTL1 or EXTL3. The cofactor is Mn(2+). Predominantly expressed in sublingual gland. Expressed at lower level in stomach and small intestine. Weakly or not expressed in submandibular gland, parotid gland, kidney, liver, heart, brain, spleen, lung, skeletal muscle, testis, ovary, cervix and uterus.

It is found in the golgi apparatus membrane. It carries out the reaction L-seryl-[protein] + UDP-N-acetyl-alpha-D-galactosamine = a 3-O-[N-acetyl-alpha-D-galactosaminyl]-L-seryl-[protein] + UDP + H(+). The enzyme catalyses L-threonyl-[protein] + UDP-N-acetyl-alpha-D-galactosamine = a 3-O-[N-acetyl-alpha-D-galactosaminyl]-L-threonyl-[protein] + UDP + H(+). Its pathway is protein modification; protein glycosylation. Catalyzes the initial reaction in O-linked oligosaccharide biosynthesis, the transfer of an N-acetyl-D-galactosamine residue to a serine or threonine residue on the protein receptor. Has activity toward EA2 peptide substrate, but has a weak activity toward Muc2, Muc1b, rMuc-2 or mG-Muc substrates. The sequence is that of Polypeptide N-acetylgalactosaminyltransferase 5 (Galnt5) from Rattus norvegicus (Rat).